A 457-amino-acid polypeptide reads, in one-letter code: tRNA-2-methylthio-N(6)-dimethylallyladenosine synthase (457 aa).

The MTTase N-terminal domain occupies 3 to 120; sequence KKVYVKTFGC…LPQMIDKRRE (118 aa). [4Fe-4S] cluster-binding residues include Cys-12, Cys-49, Cys-83, Cys-157, Cys-161, and Cys-164. Positions 143–377 constitute a Radical SAM core domain; sequence RVDGPSAFVS…QATIEENVQR (235 aa). One can recognise a TRAM domain in the interval 380 to 447; the sequence is DSMVGKIERI…PHSLRGELVL (68 aa).

It belongs to the methylthiotransferase family. MiaB subfamily. In terms of assembly, monomer. [4Fe-4S] cluster is required as a cofactor.

Its subcellular location is the cytoplasm. The enzyme catalyses N(6)-dimethylallyladenosine(37) in tRNA + (sulfur carrier)-SH + AH2 + 2 S-adenosyl-L-methionine = 2-methylsulfanyl-N(6)-dimethylallyladenosine(37) in tRNA + (sulfur carrier)-H + 5'-deoxyadenosine + L-methionine + A + S-adenosyl-L-homocysteine + 2 H(+). Its function is as follows. Catalyzes the methylthiolation of N6-(dimethylallyl)adenosine (i(6)A), leading to the formation of 2-methylthio-N6-(dimethylallyl)adenosine (ms(2)i(6)A) at position 37 in tRNAs that read codons beginning with uridine. This chain is tRNA-2-methylthio-N(6)-dimethylallyladenosine synthase, found in Paraburkholderia phytofirmans (strain DSM 17436 / LMG 22146 / PsJN) (Burkholderia phytofirmans).